Consider the following 160-residue polypeptide: uncharacterized protein (160 aa).

3 C2H2-type zinc fingers span residues 10–32, 41–64, and 75–98; these read LSCLLCEQTFDATEKLDEHLPTH, QTCDICGRTMRSSLELHQHYKRYH, and FQCQLCDKVFLLQDHLKVHVKIEH. Residue Y115 is modified to Phosphotyrosine. Position 116 is a phosphoserine (S116).

Its subcellular location is the nucleus. In terms of biological role, may be involved in transcriptional regulation. This is an uncharacterized protein from Drosophila melanogaster (Fruit fly).